Here is a 117-residue protein sequence, read N- to C-terminus: Large ribosomal subunit protein uL18 (117 aa).

Belongs to the universal ribosomal protein uL18 family. In terms of assembly, part of the 50S ribosomal subunit; part of the 5S rRNA/L5/L18/L25 subcomplex. Contacts the 5S and 23S rRNAs.

This is one of the proteins that bind and probably mediate the attachment of the 5S RNA into the large ribosomal subunit, where it forms part of the central protuberance. In Coxiella burnetii (strain CbuK_Q154) (Coxiella burnetii (strain Q154)), this protein is Large ribosomal subunit protein uL18.